The primary structure comprises 311 residues: Ribose-phosphate pyrophosphokinase (311 aa).

Residues 34–36 and 93–94 each bind ATP; these read DQE and RQ. Positions 127 and 168 each coordinate Mg(2+). Lysine 191 is a catalytic residue. D-ribose 5-phosphate is bound by residues arginine 193, aspartate 217, and 221-225; that span reads DSGGT.

This sequence belongs to the ribose-phosphate pyrophosphokinase family. Class I subfamily. Homohexamer. Requires Mg(2+) as cofactor.

It is found in the cytoplasm. It carries out the reaction D-ribose 5-phosphate + ATP = 5-phospho-alpha-D-ribose 1-diphosphate + AMP + H(+). It participates in metabolic intermediate biosynthesis; 5-phospho-alpha-D-ribose 1-diphosphate biosynthesis; 5-phospho-alpha-D-ribose 1-diphosphate from D-ribose 5-phosphate (route I): step 1/1. In terms of biological role, involved in the biosynthesis of the central metabolite phospho-alpha-D-ribosyl-1-pyrophosphate (PRPP) via the transfer of pyrophosphoryl group from ATP to 1-hydroxyl of ribose-5-phosphate (Rib-5-P). The sequence is that of Ribose-phosphate pyrophosphokinase from Mesorhizobium japonicum (strain LMG 29417 / CECT 9101 / MAFF 303099) (Mesorhizobium loti (strain MAFF 303099)).